We begin with the raw amino-acid sequence, 142 residues long: Large ribosomal subunit protein uL29 (142 aa).

It belongs to the universal ribosomal protein uL29 family.

The sequence is that of Large ribosomal subunit protein uL29 (RPL35) from Theileria annulata.